Here is a 177-residue protein sequence, read N- to C-terminus: Large ribosomal subunit protein uL10 (177 aa).

The protein belongs to the universal ribosomal protein uL10 family. Part of the ribosomal stalk of the 50S ribosomal subunit. The N-terminus interacts with L11 and the large rRNA to form the base of the stalk. The C-terminus forms an elongated spine to which L12 dimers bind in a sequential fashion forming a multimeric L10(L12)X complex.

Its function is as follows. Forms part of the ribosomal stalk, playing a central role in the interaction of the ribosome with GTP-bound translation factors. This chain is Large ribosomal subunit protein uL10, found in Leptospira borgpetersenii serovar Hardjo-bovis (strain JB197).